A 482-amino-acid polypeptide reads, in one-letter code: MSKKLTTAAGCPVAHNQNVQTAGKRGPQLLQDVWFLEKLAHFDREVIPERRMHAKGSGAYGTFTVTHDITKYTKAKLFSEIGKQTELFARFTTVAGERGAADAERDIRGFALKFYTEEGNWDLVGNNTPVFFLRDPLKFPDLNHAVKRDPRTNMRSAKNNWDFWTSLPEALHQVTIVMSDRGIPATYRHMHGFGSHTFSFINSDNERFWVKFHFKSQQGIKNLSDAEAAQVIGQDRESHQRDLLESIDNQDFPKWTLKVQIMPEADAATVPYNPFDLTKVWPHKDYPLIEVGEFELNRNPQNFFAEVEQSAFNPANVVPGISFSPDKMLQGRLFAYGDAQRYRLGVNHQHIPVNAPRCPVHSYHRDGAMRVDGNFGSTLGYEPNNEGQWAEQPDFAEPALNLDGAAAHWDHREDEDYFSQPGDLFRLMTAEQQAILFDNTARNLNGVPKEIQLRHLRHCYKADPAYGEGIGKLLDIDVSEFN.

Residues His-53 and Asn-126 contribute to the active site. Tyr-336 provides a ligand contact to heme.

Belongs to the catalase family. The cofactor is heme.

It is found in the periplasm. It catalyses the reaction 2 H2O2 = O2 + 2 H2O. Its function is as follows. Decomposes hydrogen peroxide into water and oxygen; serves to protect cells from the toxic effects of hydrogen peroxide. Could protect cells in nodules which have a high potential to produce hydrogen peroxide because of the strong reducing conditions required for nitrogen fixation and the action of several proteins. This Aliivibrio fischeri (strain ATCC 700601 / ES114) (Vibrio fischeri) protein is Catalase (katA).